The sequence spans 302 residues: UPF0761 membrane protein Tola_0461 (302 aa).

Helical transmembrane passes span tyrosine 51–leucine 71, threonine 111–aspartate 131, isoleucine 150–leucine 170, leucine 188–leucine 208, alanine 222–tyrosine 242, and alanine 256–leucine 276.

It belongs to the UPF0761 family.

The protein localises to the cell inner membrane. The polypeptide is UPF0761 membrane protein Tola_0461 (Tolumonas auensis (strain DSM 9187 / NBRC 110442 / TA 4)).